The primary structure comprises 54 residues: Hemolytic toxin (54 aa).

A plays an important role in the hemolytic activity region spans residues 3-12; sequence ALAGTIIAGA. The N-terminal region stretch occupies residues 11–30; the sequence is GASLGFQILDKVLGELGKVS.

This sequence belongs to the actinoporin family. Sea anemone subfamily. As to quaternary structure, octamer or nonamer in membranes. Monomer in the soluble state.

It is found in the secreted. It localises to the nematocyst. Its subcellular location is the target cell membrane. Functionally, pore-forming protein that forms cations-selective hydrophilic pores of around 1 nm and causes cytolysis. Pore formation is a multi-step process that involves specific recognition of membrane sphingomyelin (but neither cholesterol nor phosphatidylcholine) using aromatic rich region and adjacent phosphocholine (POC) binding site, firm binding to the membrane (mainly driven by hydrophobic interactions) accompanied by the transfer of the N-terminal region to the lipid-water interface and finally pore formation after oligomerization of monomers. The sequence is that of Hemolytic toxin from Heteractis magnifica (Magnificent sea anemone).